Consider the following 195-residue polypeptide: Peptidyl-tRNA hydrolase (195 aa).

Residue Tyr-17 coordinates tRNA. Residue His-22 is the Proton acceptor of the active site. Residues Tyr-68, Asn-70, and Asn-116 each contribute to the tRNA site.

Belongs to the PTH family. As to quaternary structure, monomer.

It is found in the cytoplasm. It catalyses the reaction an N-acyl-L-alpha-aminoacyl-tRNA + H2O = an N-acyl-L-amino acid + a tRNA + H(+). Its function is as follows. Hydrolyzes ribosome-free peptidyl-tRNAs (with 1 or more amino acids incorporated), which drop off the ribosome during protein synthesis, or as a result of ribosome stalling. Catalyzes the release of premature peptidyl moieties from peptidyl-tRNA molecules trapped in stalled 50S ribosomal subunits, and thus maintains levels of free tRNAs and 50S ribosomes. The sequence is that of Peptidyl-tRNA hydrolase from Shewanella frigidimarina (strain NCIMB 400).